Consider the following 208-residue polypeptide: Negative modulator of initiation of replication (208 aa).

Residues 115–116 form an interaction with DNA region; sequence AV.

The protein belongs to the SeqA family. Homodimer. Polymerizes to form helical filaments.

Its subcellular location is the cytoplasm. In terms of biological role, negative regulator of replication initiation, which contributes to regulation of DNA replication and ensures that replication initiation occurs exactly once per chromosome per cell cycle. Binds to pairs of hemimethylated GATC sequences in the oriC region, thus preventing assembly of replication proteins and re-initiation at newly replicated origins. Repression is relieved when the region becomes fully methylated. This is Negative modulator of initiation of replication from Shewanella frigidimarina (strain NCIMB 400).